Reading from the N-terminus, the 899-residue chain is Protein translocase subunit SecA (899 aa).

Residues glutamine 87, 105–109, and aspartate 516 each bind ATP; that span reads GEGKT. Positions 884, 886, 895, and 896 each coordinate Zn(2+).

This sequence belongs to the SecA family. In terms of assembly, monomer and homodimer. Part of the essential Sec protein translocation apparatus which comprises SecA, SecYEG and auxiliary proteins SecDF. Other proteins may also be involved. Zn(2+) is required as a cofactor.

The protein localises to the cell inner membrane. It localises to the cytoplasm. It catalyses the reaction ATP + H2O + cellular proteinSide 1 = ADP + phosphate + cellular proteinSide 2.. Its function is as follows. Part of the Sec protein translocase complex. Interacts with the SecYEG preprotein conducting channel. Has a central role in coupling the hydrolysis of ATP to the transfer of proteins into and across the cell membrane, serving as an ATP-driven molecular motor driving the stepwise translocation of polypeptide chains across the membrane. The protein is Protein translocase subunit SecA of Borreliella burgdorferi (strain ATCC 35210 / DSM 4680 / CIP 102532 / B31) (Borrelia burgdorferi).